The primary structure comprises 243 residues: Large ribosomal subunit protein uL3 (243 aa).

Disordered regions lie at residues 139–164 (VSHR…KMPG) and 218–243 (KPGK…QEGV). The residue at position 151 (glutamine 151) is an N5-methylglutamine. The segment covering 231 to 243 (QTAAAPAAEQEGV) has biased composition (low complexity).

It belongs to the universal ribosomal protein uL3 family. Part of the 50S ribosomal subunit. Forms a cluster with proteins L14 and L19. Methylated by PrmB.

Functionally, one of the primary rRNA binding proteins, it binds directly near the 3'-end of the 23S rRNA, where it nucleates assembly of the 50S subunit. The polypeptide is Large ribosomal subunit protein uL3 (Rhodopseudomonas palustris (strain BisB18)).